Here is a 377-residue protein sequence, read N- to C-terminus: 1,3,6,8-tetrahydroxynaphthalene synthase (377 aa).

Residue Cys-164 is part of the active site.

Belongs to the thiolase-like superfamily. Chalcone/stilbene synthases family. Homodimer.

The catalysed reaction is 5 malonyl-CoA + 5 H(+) = naphthalene-1,3,6,8-tetrol + 5 CO2 + 5 CoA + H2O. It functions in the pathway pigment biosynthesis; melanin biosynthesis. In terms of biological role, involved in the biosynthesis of melanin but also various secondary metabolites containing a naphthoquinone ring. Catalyzes the iterative condensation of five CoA-linked malonyl units to form a pentaketide intermediate. THNS subsequently catalyzes the dual intramolecular Claisen and aldol condensations of this linear intermediate to produce the fused ring of 1,3,6,8-tetrahydroxynaphthalene (THN). This chain is 1,3,6,8-tetrahydroxynaphthalene synthase, found in Streptomyces peucetius subsp. caesius.